We begin with the raw amino-acid sequence, 179 residues long: Large ribosomal subunit protein uL5 (179 aa).

Belongs to the universal ribosomal protein uL5 family. In terms of assembly, part of the 50S ribosomal subunit; part of the 5S rRNA/L5/L18/L25 subcomplex. Contacts the 5S rRNA and the P site tRNA. Forms a bridge to the 30S subunit in the 70S ribosome.

Its function is as follows. This is one of the proteins that bind and probably mediate the attachment of the 5S RNA into the large ribosomal subunit, where it forms part of the central protuberance. In the 70S ribosome it contacts protein S13 of the 30S subunit (bridge B1b), connecting the 2 subunits; this bridge is implicated in subunit movement. Contacts the P site tRNA; the 5S rRNA and some of its associated proteins might help stabilize positioning of ribosome-bound tRNAs. This Cellvibrio japonicus (strain Ueda107) (Pseudomonas fluorescens subsp. cellulosa) protein is Large ribosomal subunit protein uL5.